The sequence spans 229 residues: Cytidylate kinase (229 aa).

ATP is bound at residue 12–20 (GPSGSGKGT).

It belongs to the cytidylate kinase family. Type 1 subfamily.

It localises to the cytoplasm. It carries out the reaction CMP + ATP = CDP + ADP. The catalysed reaction is dCMP + ATP = dCDP + ADP. The protein is Cytidylate kinase of Pseudomonas fluorescens (strain Pf0-1).